A 141-amino-acid polypeptide reads, in one-letter code: Hemoglobin subunit alpha-D (141 aa).

One can recognise a Globin domain in the interval 1-141 (VLTHEDCELL…VGDMLAEKYR (141 aa)). Heme b contacts are provided by His58 and His87.

Belongs to the globin family. As to quaternary structure, there are three forms of hemoglobin in Sphenodon: A, A' and D. Hb A is a tetramer of two alpha-A and two beta-1, Hb A' is a tetramer of two alpha-a and two beta-2, Hb D is a tetramer of two alpha-D and two beta-2. Red blood cells.

In terms of biological role, involved in oxygen transport from the lung to the various peripheral tissues. The polypeptide is Hemoglobin subunit alpha-D (HBAD) (Sphenodon punctatus (Tuatara)).